Here is a 172-residue protein sequence, read N- to C-terminus: Ribosome maturation factor RimM (172 aa).

Residues 94-167 (ENEFYLFQLK…FIKVELLPGM (74 aa)) form the PRC barrel domain.

It belongs to the RimM family. As to quaternary structure, binds ribosomal protein uS19.

It is found in the cytoplasm. In terms of biological role, an accessory protein needed during the final step in the assembly of 30S ribosomal subunit, possibly for assembly of the head region. Essential for efficient processing of 16S rRNA. May be needed both before and after RbfA during the maturation of 16S rRNA. It has affinity for free ribosomal 30S subunits but not for 70S ribosomes. The polypeptide is Ribosome maturation factor RimM (Carboxydothermus hydrogenoformans (strain ATCC BAA-161 / DSM 6008 / Z-2901)).